The sequence spans 370 residues: 3-isopropylmalate dehydrogenase (370 aa).

Residues Arg-99, Arg-109, Arg-137, and Asp-227 each contribute to the substrate site. Mg(2+) contacts are provided by Asp-227, Asp-251, and Asp-255. An NAD(+)-binding site is contributed by 290 to 302 (GSAPDIAGQDKAN).

This sequence belongs to the isocitrate and isopropylmalate dehydrogenases family. LeuB type 1 subfamily. As to quaternary structure, homodimer. The cofactor is Mg(2+). Mn(2+) serves as cofactor.

It localises to the cytoplasm. The catalysed reaction is (2R,3S)-3-isopropylmalate + NAD(+) = 4-methyl-2-oxopentanoate + CO2 + NADH. The protein operates within amino-acid biosynthesis; L-leucine biosynthesis; L-leucine from 3-methyl-2-oxobutanoate: step 3/4. Functionally, catalyzes the oxidation of 3-carboxy-2-hydroxy-4-methylpentanoate (3-isopropylmalate) to 3-carboxy-4-methyl-2-oxopentanoate. The product decarboxylates to 4-methyl-2 oxopentanoate. The sequence is that of 3-isopropylmalate dehydrogenase from Rhodospirillum rubrum (strain ATCC 11170 / ATH 1.1.1 / DSM 467 / LMG 4362 / NCIMB 8255 / S1).